Reading from the N-terminus, the 471-residue chain is 3-isopropylmalate dehydratase large subunit (471 aa).

The [4Fe-4S] cluster site is built by cysteine 347, cysteine 407, and cysteine 410.

It belongs to the aconitase/IPM isomerase family. LeuC type 1 subfamily. In terms of assembly, heterodimer of LeuC and LeuD. Requires [4Fe-4S] cluster as cofactor.

The catalysed reaction is (2R,3S)-3-isopropylmalate = (2S)-2-isopropylmalate. It participates in amino-acid biosynthesis; L-leucine biosynthesis; L-leucine from 3-methyl-2-oxobutanoate: step 2/4. Its function is as follows. Catalyzes the isomerization between 2-isopropylmalate and 3-isopropylmalate, via the formation of 2-isopropylmaleate. This Geobacillus thermodenitrificans (strain NG80-2) protein is 3-isopropylmalate dehydratase large subunit.